The following is a 369-amino-acid chain: NSFL1 cofactor p47 (369 aa).

Disordered regions lie at residues 46-115 and 133-156; these read DEDI…KSPN and VDRTAKSSGESSKPKPFAGGGYRL. A compositionally biased stretch (basic and acidic residues) spans 67-81; that stretch reads SDHRVTSFRDLVHAQ. Positions 109–115 match the Nuclear localization signal motif; that stretch reads PRKKSPN. Positions 172-175 match the Nuclear localization signal motif; sequence RHNS. An SEP domain is found at 178–243; it reads DVHVVLKLWK…MEDHRDEEYV (66 aa). Residues 260–277 are compositionally biased toward polar residues; the sequence is GSTAPQVLSTSSPAQQAE. A disordered region spans residues 260–280; it reads GSTAPQVLSTSSPAQQAENEA. Positions 291–367 constitute a UBX domain; that stretch reads SEPVTNIQIR…NLLNAVIVQR (77 aa).

This sequence belongs to the NSFL1C family.

It is found in the nucleus. The protein localises to the golgi apparatus. It localises to the golgi stack. The protein resides in the cytoplasm. Its subcellular location is the cytoskeleton. It is found in the microtubule organizing center. The protein localises to the centrosome. In terms of biological role, reduces the ATPase activity of VCP. Necessary for the fragmentation of Golgi stacks during mitosis and for VCP-mediated reassembly of Golgi stacks after mitosis. May play a role in VCP-mediated formation of transitional endoplasmic reticulum (tER). Inhibits the activity of CTSL (in vitro). Together with UBXN2B/p37, regulates the centrosomal levels of kinase AURKA/Aurora A levels during mitotic progression by promoting AURKA removal from centrosomes in prophase. Also, regulates spindle orientation during mitosis. The chain is NSFL1 cofactor p47 (NSFL1C) from Gallus gallus (Chicken).